A 280-amino-acid polypeptide reads, in one-letter code: MSVFDLFRGFFGFPGPRSHRDPFFGGMTRDDDDDDDDDDEAEEDRGAWGRESYAFDGSQPPEEFGFSFSPRGGMRFHGNFGFDDLVRDFNSIFSEMGAWTLPSHSPELPGPESETPGERLREGQTLRDSMLKYPDSHQPRIFEGVLESHAKPESPKPAPDWGSQGPFHRLDDTWPVSPHSRAKEDKDLDSQVSQEGLGPLLQPQPKSYFKSISVTKITKPDGTVEERRTVVDSEGRRETTVTHQEAHDSSRSDPDSQRSSALDDPFSILDLLLGRWFRSR.

An N-acetylserine modification is found at S2. The tract at residues 2–45 (SVFDLFRGFFGFPGPRSHRDPFFGGMTRDDDDDDDDDDEAEEDR) is required for localization in mitochondria. 2 disordered regions span residues 12-70 (GFPG…SFSP) and 100-263 (TLPS…SALD). A compositionally biased stretch (acidic residues) spans 30 to 43 (DDDDDDDDDDEAEE). The interval 115-280 (TPGERLREGQ…LLLGRWFRSR (166 aa)) is involved in HCLS1 binding. 2 stretches are compositionally biased toward basic and acidic residues: residues 116–125 (PGERLREGQT) and 134–154 (PDSHQPRIFEGVLESHAKPES). The involved in CASP9 binding stretch occupies residues 176–207 (VSPHSRAKEDKDLDSQVSQEGLGPLLQPQPKS). The involved in GNA13 binding stretch occupies residues 177-248 (SPHSRAKEDK…TTVTHQEAHD (72 aa)). Residues 184–280 (EDKDLDSQVS…LLLGRWFRSR (97 aa)) form a required for localization in sarcoplasmic reticulum region. The interval 185–280 (DKDLDSQVSQ…LLLGRWFRSR (96 aa)) is involved in PKD2 binding. A phosphoserine mark is found at S190 and S193. The segment at 204 to 226 (QPKSYFKSISVTKITKPDGTVEE) is involved in PLN binding. The interval 204-246 (QPKSYFKSISVTKITKPDGTVEERRTVVDSEGRRETTVTHQEA) is involved in ATP2A2 binding. Positions 211 to 280 (SISVTKITKP…LLLGRWFRSR (70 aa)) are mediates interaction with UCP3. Positions 218-256 (TKPDGTVEERRTVVDSEGRRETTVTHQEAHDSSRSDPDS) are enriched in basic and acidic residues. Positions 271–280 (LLLGRWFRSR) are required for ITGB6 binding.

The protein belongs to the HAX1 family. Interacts with ABCB1, ABCB4 and ABCB11. Directly associates with HCLS1/HS1, through binding to its N-terminal region. Interacts with CTTN. Interacts with PKD2. Interacts with GNA13. Interacts with CASP9. Interacts with ITGB6. Interacts with PLN and ATP2A2; these interactions are inhibited by calcium. Interacts with GRB7. Interacts (via C-terminus) with XIAP/BIRC4 (via BIR 2 domain and BIR 3 domain) and this interaction blocks ubiquitination of XIAP/BIRC4. Interacts with TPC2. Interacts with KCNC3. Interacts with XPO1. Interacts with RNF217. Interacts with UCP3; the interaction is direct and calcium-dependent. Interacts with MAPRE2; this interaction regulates cell migration in keratinocytes. As to expression, ubiquitous, with highest levels in kidney and liver (at protein level).

The protein localises to the mitochondrion matrix. Its subcellular location is the endoplasmic reticulum. It is found in the nucleus membrane. The protein resides in the cytoplasmic vesicle. It localises to the cytoplasm. The protein localises to the cell cortex. Its subcellular location is the cell membrane. It is found in the sarcoplasmic reticulum. The protein resides in the P-body. It localises to the nucleus. Functionally, recruits the Arp2/3 complex to the cell cortex and regulates reorganization of the cortical actin cytoskeleton via its interaction with KCNC3 and the Arp2/3 complex. Slows down the rate of inactivation of KCNC3 channels. Promotes GNA13-mediated cell migration. Involved in the clathrin-mediated endocytosis pathway. May be involved in internalization of ABC transporters such as ABCB11. May inhibit CASP9 and CASP3. Promotes cell survival. May regulate intracellular calcium pools. The polypeptide is HCLS1-associated protein X-1 (Hax1) (Mus musculus (Mouse)).